Reading from the N-terminus, the 281-residue chain is MDNRGIGYIDSGLGGLTVVREALKQLPNESVYFVGDEARMPYGPRPTVEIQKFTLQMADFLVKKHNIKALVVACNTATAQALPQLRAYLEIPVIGVISAGALAGINATRNLHVNVIGTQSTVESKAYYDQLIALNSDLVIEQKALPEFVQLVESDMAGTPKGKQIVYQAIHNWMEEKNDGKKSDTLVLGCTHFPILKKEIQAAVDKNVAVVDPASEEILQTAEIMRKNNAFHDSKNINHHEKDVFYTTGNIGRFSKFTREWLNKSNLTIKELHIDQKGLKE.

Residues 10-11 (DS) and 42-43 (YG) contribute to the substrate site. Cys74 serves as the catalytic Proton donor/acceptor. Position 75–76 (75–76 (NT)) interacts with substrate. Residue Cys190 is the Proton donor/acceptor of the active site. A substrate-binding site is contributed by 191 to 192 (TH).

Belongs to the aspartate/glutamate racemases family.

It carries out the reaction L-glutamate = D-glutamate. It functions in the pathway cell wall biogenesis; peptidoglycan biosynthesis. Provides the (R)-glutamate required for cell wall biosynthesis. The sequence is that of Glutamate racemase from Oenococcus oeni (strain ATCC BAA-331 / PSU-1).